A 99-amino-acid chain; its full sequence is Integration host factor subunit alpha (99 aa).

A disordered region spans residues 49–73 (FGNFDLRDKNQRPGRNPKTGEDIPI).

Belongs to the bacterial histone-like protein family. In terms of assembly, heterodimer of an alpha and a beta chain.

In terms of biological role, this protein is one of the two subunits of integration host factor, a specific DNA-binding protein that functions in genetic recombination as well as in transcriptional and translational control. This Serratia marcescens protein is Integration host factor subunit alpha (ihfA).